Consider the following 214-residue polypeptide: DNA-binding protein HupB (214 aa).

Position 3 is an N6-acetyllysine (Lys3). Lys3 carries the post-translational modification N6-succinyllysine. 2 positions are modified to phosphothreonine: Thr43 and Thr45. Lys72, Lys86, and Lys103 each carry N6-acetyllysine. The disordered stretch occupies residues 100 to 214 (PAVKRGVGAS…KKATARRGRK (115 aa)). Positions 102-112 (VKRGVGASAAK) are enriched in low complexity. An N6-succinyllysine modification is found at Lys113. A compositionally biased stretch (basic residues) spans 113–214 (KVAKKAPAKK…KKATARRGRK (102 aa)). N6-acetyllysine is present on residues Lys116 and Lys133. N6-succinyllysine is present on Lys142. Lys146 and Lys167 each carry N6-acetyllysine.

Belongs to the bacterial histone-like protein family. Long actinobacterial subfamily. As to quaternary structure, oligomerizes. Homodimer; the crystallized protein is missing the C-terminal 105 residues. Interacts with topoisomerase 1 (topA). Interacts with Eis. Interacts with NAD-dependent protein deacylase NPD (MRA_1161). Interacts with MRA_0812 CoA transferase. Post-translationally, phosphorylated in vivo on Ser and Thr-residues; the protein is degraded during purification so most sites were not identified, but at least one of Thr-43 and/or Thr-45 are modified in vivo. In vitro at least PknE, PknF and PknB phosphorylate HupB; PknE is the most active and phosphorylates many sites in vitro including Thr-43 and Thr-45. Acetylated on 8 Lys residues in vivo (probably by Eis). In vitro acetylated by Eis on 28 residues (strains H37Rv and H37Ra), many more than those identified in vivo. Also acetylated by MRA_0812. Deacetylated in vitro by NAD-dependent protein deacylase NPD (MRA_1161). In terms of processing, succinylated in vivo and in vitro by MRA_0812 and by Eis; only 3 residues are found to be succinylated in vivo, while 27 are modifed in vitro by MRA_0812 and 32 are succinylated by Eis. NAD-dependent protein deacylase (MRA_1161) desuccinylates this protein.

Its subcellular location is the cytoplasm. The protein localises to the nucleoid. It carries out the reaction 4 Fe(2+) + O2 + 4 H(+) = 4 Fe(3+) + 2 H2O. Two trans-stilbene derivatives, 4,4'-[(E)-ethene-1,2 diylbis({5[(phenylcarbonyl)amino]benzene-2,1-diyl}sulfonylimino)] dibenzoic acid and its methoxy derivative 4,4'-[1,2-ethenediylbis({5-[(4-methoxybenzoyl)amino]-2,1phenylene}sulfonylimino)] dibenzoic acid, respectively SD1 and SD4, inhibit DNA binding with 50% inhibition at 20 uM for SD1 and 1.7 uM for SD4. SD1 and SD4 have minimal inhibitory concentrations of 400 and 800 uM on strain H37Ra respectively. Its function is as follows. A nucleoid-associated protein (NAP) that plays a role in local chromosome architecture. Binds DNA non-sequence specifically; in vitro phosphorylation of an N-terminal fragment decreases DNA-binding. Stimulates supercoiling relaxation by topoisomerase 1 (Top1, topA), at higher than 80 uM inhibits relaxation, has no effect on DNA gyrase; the effect is independent of DNA-binding. Increases the intervening strand passage activity of Top1 that occurs between the two catalytic trans-esterification reactions. Does not bind ssDNA, probably helps condense chromosomes. Binds dsDNA; in vitro acetylated protein binds 10-fold less well to DNA (note in vitro acetylated protein is more heavily modified than in vivo modified protein). In vitro acetylated protein compacts DNA less well than unmodified protein. In vitro succinylated DNA bind dsDNA less well than unmodified protein (note in vitro succinylated protein is more heavily modified than in vivo modified protein). In terms of biological role, has ferroxidase activity, converts Fe(2+) into Fe(3+). Binds Fe(3+) but not Fe(2+); prevents the generation of hydroxyl radicals by the Fenton reaction and thus protects DNA from damage. May function in iron storage. Required for biofilm formation; trimethylation by recombinant human SUV39H1 (a histone methyltransferase) inhibits biofilm formation. Probably influences transcription. RNase E and HupB jointly contribute to cellular adaptation to changing growth conditions and survival during antibiotic treatment and in the host. The protein is DNA-binding protein HupB of Mycobacterium tuberculosis (strain ATCC 25177 / H37Ra).